The following is a 491-amino-acid chain: UDP-N-acetylmuramate--L-alanine ligase (491 aa).

126–132 (GTHGKTT) is an ATP binding site.

Belongs to the MurCDEF family.

It localises to the cytoplasm. It carries out the reaction UDP-N-acetyl-alpha-D-muramate + L-alanine + ATP = UDP-N-acetyl-alpha-D-muramoyl-L-alanine + ADP + phosphate + H(+). Its pathway is cell wall biogenesis; peptidoglycan biosynthesis. Cell wall formation. The protein is UDP-N-acetylmuramate--L-alanine ligase of Shigella flexneri serotype 5b (strain 8401).